A 311-amino-acid polypeptide reads, in one-letter code: Taste receptor type 2 member 40 (311 aa).

At 1-9 (MSSLFSSFC) the chain is on the extracellular side. The helical transmembrane segment at 10-30 (LVIAIFESVVGLLGNGTIVAV) threads the bilayer. The Cytoplasmic portion of the chain corresponds to 31-55 (SSTSCIRSKILSSYDVIVIFLSLSR). Residues 56–76 (FFLQLWMILDFLLIFFCQPSY) form a helical membrane-spanning segment. Residues 77–87 (YEENLFVTFKT) lie on the Extracellular side of the membrane. The helical transmembrane segment at 88–108 (VFIFLNSYSFWFAAWLSVFYC) threads the bilayer. Residues 109 to 128 (VKVASFTQSFLSWLKQRIAS) are Cytoplasmic-facing. The helical transmembrane segment at 129–149 (LIPWMLITSSLFSFATSLPFF) threads the bilayer. At 150 to 178 (WDSYNAHSNFTTPLTMTNSSKRITTRKTN) the chain is on the extracellular side. Residues 179 to 199 (LIFLILLCNVGIALPSIMLVF) form a helical membrane-spanning segment. The Cytoplasmic portion of the chain corresponds to 200 to 235 (SSILLIRSLWRHTRQMQNNATGFRDPSLEALIGAIK). A helical transmembrane segment spans residues 236 to 256 (TVFSFLLLYITNFIALILILS). Residues 257–266 (DTFVPLSTEE) lie on the Extracellular side of the membrane. Residues 267–287 (AICVVVVAACPAGQSMVLIWS) form a helical membrane-spanning segment. The Cytoplasmic segment spans residues 288–311 (NPRFRELLSSILHYVNSCVRARCS).

Belongs to the G-protein coupled receptor T2R family. As to expression, expressed in the oral cavity, as well as in the gastrointestinal tract, including in the upper palate, tongue, proventriculus, ventriculus, duodenum, jejunum, ileum, cecum and colon.

Its subcellular location is the cell membrane. Its function is as follows. Bitter taste receptor. Binds quinine, dextromethorphan, diphenhydramine, diphenidol, chlorpheniramine, diphenidol, chloramphenicol, chloroquine and coumarin, this latter being a weak agonist, as well as epiquinidine, ethylhydrocupreine and quinidine. This chain is Taste receptor type 2 member 40 (TAS2R40), found in Gallus gallus (Chicken).